Here is a 327-residue protein sequence, read N- to C-terminus: DNA-directed RNA polymerase subunit alpha (327 aa).

The segment at 1–233 is alpha N-terminal domain (alpha-NTD); sequence MQNSASEFLK…DQLSIFADLQ (233 aa). Residues 247–327 form an alpha C-terminal domain (alpha-CTD) region; sequence IDPILLRPVD…NWPPAGLEKP (81 aa).

This sequence belongs to the RNA polymerase alpha chain family. Homodimer. The RNAP catalytic core consists of 2 alpha, 1 beta, 1 beta' and 1 omega subunit. When a sigma factor is associated with the core the holoenzyme is formed, which can initiate transcription.

It catalyses the reaction RNA(n) + a ribonucleoside 5'-triphosphate = RNA(n+1) + diphosphate. Its function is as follows. DNA-dependent RNA polymerase catalyzes the transcription of DNA into RNA using the four ribonucleoside triphosphates as substrates. This chain is DNA-directed RNA polymerase subunit alpha, found in Chromobacterium violaceum (strain ATCC 12472 / DSM 30191 / JCM 1249 / CCUG 213 / NBRC 12614 / NCIMB 9131 / NCTC 9757 / MK).